Reading from the N-terminus, the 1102-residue chain is Centrosomal protein of 128 kDa (1102 aa).

Residues S31, S248, and S290 each carry the phosphoserine modification. Coiled coils occupy residues 215 to 822 (VSDR…LETE) and 878 to 959 (EELK…ALQM). The interval 326 to 346 (QHQVPCISKQPLSHQDDQGDD) is disordered. Disordered regions lie at residues 991 to 1048 (SEKT…DHSR) and 1070 to 1102 (DPASIEGDTTSLPANGTSPQSKKEEHEIKKYKK). The segment covering 1009 to 1027 (QQRRDDTKPRIKSFRDDRP) has biased composition (basic and acidic residues). 2 stretches are compositionally biased toward polar residues: residues 1039 to 1048 (HSSSCQDHSR) and 1076 to 1089 (GDTTSLPANGTSPQ). The segment covering 1090–1102 (SKKEEHEIKKYKK) has biased composition (basic and acidic residues).

Its subcellular location is the cytoplasm. The protein localises to the cytoskeleton. It localises to the microtubule organizing center. The protein resides in the centrosome. It is found in the centriole. Its subcellular location is the spindle pole. This is Centrosomal protein of 128 kDa (Cep128) from Mus musculus (Mouse).